We begin with the raw amino-acid sequence, 510 residues long: NAD(P)H-quinone oxidoreductase subunit 2 A, chloroplastic (510 aa).

The next 14 membrane-spanning stretches (helical) occupy residues 31–51 (FIFPECILIFGLILLLMIDLT), 59–79 (WFYFISSTSLVISITALLFRW), 99–119 (IFQFLILLCSTLCIPLSVEYI), 124–144 (MAITEFLLFVLTATLGGMFLC), 149–169 (LITIFVALECFSLCSYLLSGY), 184–204 (LLMGGASSSILVYGFSWLYGL), 229–249 (ISIALIFITVGLGFKLSLAPF), 261–281 (PTPVVAFLSVTSKVAALALAT), 295–315 (WHLLLEILAILSMILGNLLAI), 323–343 (MLAYSSIGQIGYVIIGIIVGD), 354–374 (YMLFYISMNLGTFACIVLFGL), 395–415 (ALSLALCLLSLGGLPPLAGFF), 418–438 (LYLFWCGWQAGLYFLVSIGLL), and 484–504 (MTVCVIASTILGISMNPILAI).

It belongs to the complex I subunit 2 family. In terms of assembly, NDH is composed of at least 16 different subunits, 5 of which are encoded in the nucleus.

It localises to the plastid. Its subcellular location is the chloroplast thylakoid membrane. It carries out the reaction a plastoquinone + NADH + (n+1) H(+)(in) = a plastoquinol + NAD(+) + n H(+)(out). The catalysed reaction is a plastoquinone + NADPH + (n+1) H(+)(in) = a plastoquinol + NADP(+) + n H(+)(out). Its function is as follows. NDH shuttles electrons from NAD(P)H:plastoquinone, via FMN and iron-sulfur (Fe-S) centers, to quinones in the photosynthetic chain and possibly in a chloroplast respiratory chain. The immediate electron acceptor for the enzyme in this species is believed to be plastoquinone. Couples the redox reaction to proton translocation, and thus conserves the redox energy in a proton gradient. The sequence is that of NAD(P)H-quinone oxidoreductase subunit 2 A, chloroplastic from Oryza sativa subsp. japonica (Rice).